Consider the following 119-residue polypeptide: Large ribosomal subunit protein bL20 (119 aa).

It belongs to the bacterial ribosomal protein bL20 family.

In terms of biological role, binds directly to 23S ribosomal RNA and is necessary for the in vitro assembly process of the 50S ribosomal subunit. It is not involved in the protein synthesizing functions of that subunit. This chain is Large ribosomal subunit protein bL20, found in Clostridium kluyveri (strain NBRC 12016).